Reading from the N-terminus, the 185-residue chain is Large ribosomal subunit protein uL22 (185 aa).

Belongs to the universal ribosomal protein uL22 family. As to quaternary structure, part of the 50S ribosomal subunit.

Functionally, this protein binds specifically to 23S rRNA. It makes multiple contacts with different domains of the 23S rRNA in the assembled 50S subunit and ribosome. The globular domain of the protein is located near the polypeptide exit tunnel on the outside of the subunit, while an extended beta-hairpin is found that lines the wall of the exit tunnel in the center of the 70S ribosome. The chain is Large ribosomal subunit protein uL22 from Pyrobaculum islandicum (strain DSM 4184 / JCM 9189 / GEO3).